A 241-amino-acid polypeptide reads, in one-letter code: Small ribosomal subunit protein uS3 (241 aa).

Residues 39-107 enclose the KH type-2 domain; that stretch reads IRKYLEKELK…ETHLNIVEVR (69 aa). The interval 214 to 241 is disordered; that stretch reads ASERRATEGDAAHGGGGDRERGRRRENA.

The protein belongs to the universal ribosomal protein uS3 family. In terms of assembly, part of the 30S ribosomal subunit. Forms a tight complex with proteins S10 and S14.

Its function is as follows. Binds the lower part of the 30S subunit head. Binds mRNA in the 70S ribosome, positioning it for translation. The polypeptide is Small ribosomal subunit protein uS3 (Mesorhizobium japonicum (strain LMG 29417 / CECT 9101 / MAFF 303099) (Mesorhizobium loti (strain MAFF 303099))).